The sequence spans 81 residues: Putative defensin-like protein 148 (81 aa).

Residues methionine 1 to glycine 24 form the signal peptide. 4 disulfide bridges follow: cysteine 34–cysteine 80, cysteine 43–cysteine 63, cysteine 48–cysteine 74, and cysteine 52–cysteine 76.

Belongs to the DEFL family.

It is found in the secreted. The protein is Putative defensin-like protein 148 (LCR4) of Arabidopsis thaliana (Mouse-ear cress).